We begin with the raw amino-acid sequence, 173 residues long: Bifunctional protein PyrR (173 aa).

The PRPP-binding motif lies at 93-105; sequence VILVDDVLYTGRT.

It belongs to the purine/pyrimidine phosphoribosyltransferase family. PyrR subfamily. As to quaternary structure, homodimer and homohexamer; in equilibrium.

It catalyses the reaction UMP + diphosphate = 5-phospho-alpha-D-ribose 1-diphosphate + uracil. Functionally, regulates transcriptional attenuation of the pyrimidine nucleotide (pyr) operon by binding in a uridine-dependent manner to specific sites on pyr mRNA. This disrupts an antiterminator hairpin in the RNA and favors formation of a downstream transcription terminator, leading to a reduced expression of downstream genes. In terms of biological role, also displays a weak uracil phosphoribosyltransferase activity which is not physiologically significant. This is Bifunctional protein PyrR from Streptococcus suis (strain 05ZYH33).